Here is a 320-residue protein sequence, read N- to C-terminus: Esterase LipI (320 aa).

Active-site residues include Ser-165, Asp-261, and His-291.

The protein belongs to the 'GDXG' lipolytic enzyme family.

The catalysed reaction is a fatty acid ester + H2O = an aliphatic alcohol + a fatty acid + H(+). It catalyses the reaction a butanoate ester + H2O = an aliphatic alcohol + butanoate + H(+). The enzyme catalyses an octanoate ester + H2O = an aliphatic alcohol + octanoate + H(+). It carries out the reaction decanoate ester + H2O = decanoate + an aliphatic alcohol + H(+). The catalysed reaction is an acetyl ester + H2O = an aliphatic alcohol + acetate + H(+). It catalyses the reaction a dodecanoate ester + H2O = an aliphatic alcohol + dodecanoate + H(+). With respect to regulation, inhibited by ionic detergents SDS (anions) and CTAB (cationic). Strongly inhibited by Zn(2+). Esterase that can hydrolyze short-chain esters with the carbon chain containing 2 to 12 carbon atoms. In vitro, pNP-butyrate is the preferred substrate. The sequence is that of Esterase LipI from Mycobacterium tuberculosis (strain ATCC 25618 / H37Rv).